A 194-amino-acid polypeptide reads, in one-letter code: Protein GrpE (194 aa).

Polar residues predominate over residues 1-13; sequence MENTQENPTSQNP. Positions 1–50 are disordered; it reads MENTQENPTSQNPKPAEETARQAAEAAAPQQEAAANAATDSPASAEQAAL. Over residues 21–50 the composition is skewed to low complexity; that stretch reads RQAAEAAAPQQEAAANAATDSPASAEQAAL.

Belongs to the GrpE family. Homodimer.

Its subcellular location is the cytoplasm. Participates actively in the response to hyperosmotic and heat shock by preventing the aggregation of stress-denatured proteins, in association with DnaK and GrpE. It is the nucleotide exchange factor for DnaK and may function as a thermosensor. Unfolded proteins bind initially to DnaJ; upon interaction with the DnaJ-bound protein, DnaK hydrolyzes its bound ATP, resulting in the formation of a stable complex. GrpE releases ADP from DnaK; ATP binding to DnaK triggers the release of the substrate protein, thus completing the reaction cycle. Several rounds of ATP-dependent interactions between DnaJ, DnaK and GrpE are required for fully efficient folding. The sequence is that of Protein GrpE from Paraburkholderia xenovorans (strain LB400).